The sequence spans 238 residues: DNA repair protein RecO (238 aa).

This sequence belongs to the RecO family.

Involved in DNA repair and RecF pathway recombination. This is DNA repair protein RecO from Cereibacter sphaeroides (strain ATCC 17023 / DSM 158 / JCM 6121 / CCUG 31486 / LMG 2827 / NBRC 12203 / NCIMB 8253 / ATH 2.4.1.) (Rhodobacter sphaeroides).